The sequence spans 319 residues: Probable cytochrome c oxidase subunit 2 (319 aa).

The first 33 residues, methionine 1–glycine 33, serve as a signal peptide directing secretion. The next 2 helical transmembrane spans lie at tryptophan 63–phenylalanine 83 and methionine 101–phenylalanine 121. 4 residues coordinate Cu cation: histidine 227, cysteine 262, cysteine 266, and histidine 270.

It belongs to the cytochrome c oxidase subunit 2 family. Requires Cu cation as cofactor. Heme serves as cofactor.

The protein localises to the cell membrane. It catalyses the reaction 4 Fe(II)-[cytochrome c] + O2 + 8 H(+)(in) = 4 Fe(III)-[cytochrome c] + 2 H2O + 4 H(+)(out). In terms of biological role, subunits I and II form the functional core of the enzyme complex. Electrons originating in cytochrome c are transferred via heme a and Cu(A) to the binuclear center formed by heme a3 and Cu(B). The polypeptide is Probable cytochrome c oxidase subunit 2 (ctaC) (Streptomyces avermitilis (strain ATCC 31267 / DSM 46492 / JCM 5070 / NBRC 14893 / NCIMB 12804 / NRRL 8165 / MA-4680)).